Reading from the N-terminus, the 22-residue chain is Phospholipase A2 (22 aa).

The protein belongs to the phospholipase A2 family. It depends on Ca(2+) as a cofactor.

The protein localises to the secreted. It carries out the reaction a 1,2-diacyl-sn-glycero-3-phosphocholine + H2O = a 1-acyl-sn-glycero-3-phosphocholine + a fatty acid + H(+). In terms of biological role, PA2 catalyzes the calcium-dependent hydrolysis of the 2-acyl groups in 3-sn-phosphoglycerides. The protein is Phospholipase A2 of Struthio camelus (Common ostrich).